The primary structure comprises 445 residues: MRALVLAAGKGTRMKSKIPKVLHPLSGKPMIEWVVETAGKVAQKVGVVLGFEAELVRKTLPEWVDVFVQEEQLGTAHAVMCAKDFIEPGDDVLILYGDVPLISENTLKRMIEEHRKGADVTILVADLEDPSGYGRVIQDGDKYRIIEDADLPEELKSVTTINTGFYVFSGDFLLRALPEIKNENAKGEYYLTDAVNFAEKVRVVKTDDLLEITGVNTRKTLVWLEEQLRMRKIEELLENGVTILDPATTYIHYSVEIGMDTVIHPMTFIEGKSRVGENCEIGPMTRIVDCEIGNNVKITRSECFKSVIEDDVSVGPFARLREGTILKKSSKIGNFVEIKKSTIGEGTKAQHLSYIGDAFVGKNVNIGAGTITCNYDGKKKNPTFIEDGAFIGSNSSLVAPVRIGEGALIGAGSVITEDVPPYSLGLGRAMQVVKEGWVLKKRKEE.

Residues methionine 1–arginine 218 form a pyrophosphorylase region. Residues leucine 6 to glycine 9, lysine 20, glutamine 69, glycine 74 to threonine 75, tyrosine 96 to aspartate 98, glycine 134, glutamate 147, asparagine 162, and asparagine 216 each bind UDP-N-acetyl-alpha-D-glucosamine. Residue aspartate 98 participates in Mg(2+) binding. A Mg(2+)-binding site is contributed by asparagine 216. Residues lysine 219 to asparagine 239 form a linker region. An N-acetyltransferase region spans residues glycine 240 to glutamate 445. 2 residues coordinate UDP-N-acetyl-alpha-D-glucosamine: arginine 321 and lysine 339. Histidine 351 (proton acceptor) is an active-site residue. 2 residues coordinate UDP-N-acetyl-alpha-D-glucosamine: tyrosine 354 and asparagine 365. Residues alanine 368, asparagine 374 to tyrosine 375, serine 393, alanine 411, and arginine 428 contribute to the acetyl-CoA site.

In the N-terminal section; belongs to the N-acetylglucosamine-1-phosphate uridyltransferase family. It in the C-terminal section; belongs to the transferase hexapeptide repeat family. Homotrimer. Mg(2+) serves as cofactor.

Its subcellular location is the cytoplasm. It catalyses the reaction alpha-D-glucosamine 1-phosphate + acetyl-CoA = N-acetyl-alpha-D-glucosamine 1-phosphate + CoA + H(+). It carries out the reaction N-acetyl-alpha-D-glucosamine 1-phosphate + UTP + H(+) = UDP-N-acetyl-alpha-D-glucosamine + diphosphate. It participates in nucleotide-sugar biosynthesis; UDP-N-acetyl-alpha-D-glucosamine biosynthesis; N-acetyl-alpha-D-glucosamine 1-phosphate from alpha-D-glucosamine 6-phosphate (route II): step 2/2. The protein operates within nucleotide-sugar biosynthesis; UDP-N-acetyl-alpha-D-glucosamine biosynthesis; UDP-N-acetyl-alpha-D-glucosamine from N-acetyl-alpha-D-glucosamine 1-phosphate: step 1/1. It functions in the pathway bacterial outer membrane biogenesis; LPS lipid A biosynthesis. Catalyzes the last two sequential reactions in the de novo biosynthetic pathway for UDP-N-acetylglucosamine (UDP-GlcNAc). The C-terminal domain catalyzes the transfer of acetyl group from acetyl coenzyme A to glucosamine-1-phosphate (GlcN-1-P) to produce N-acetylglucosamine-1-phosphate (GlcNAc-1-P), which is converted into UDP-GlcNAc by the transfer of uridine 5-monophosphate (from uridine 5-triphosphate), a reaction catalyzed by the N-terminal domain. This chain is Bifunctional protein GlmU, found in Thermotoga sp. (strain RQ2).